We begin with the raw amino-acid sequence, 239 residues long: tRNA (guanine-N(7)-)-methyltransferase (239 aa).

S-adenosyl-L-methionine contacts are provided by Glu69, Glu94, Asp121, and Asp144. Asp144 is an active-site residue. Residue Lys148 participates in substrate binding. Positions 150–155 are interaction with RNA; sequence RHNKRR. Substrate-binding positions include Asp180 and 217 to 220; that span reads TKFE.

Belongs to the class I-like SAM-binding methyltransferase superfamily. TrmB family. Monomer.

The catalysed reaction is guanosine(46) in tRNA + S-adenosyl-L-methionine = N(7)-methylguanosine(46) in tRNA + S-adenosyl-L-homocysteine. It functions in the pathway tRNA modification; N(7)-methylguanine-tRNA biosynthesis. Catalyzes the formation of N(7)-methylguanine at position 46 (m7G46) in tRNA. The sequence is that of tRNA (guanine-N(7)-)-methyltransferase from Klebsiella pneumoniae subsp. pneumoniae (strain ATCC 700721 / MGH 78578).